The following is a 415-amino-acid chain: Glutamyl-tRNA reductase (415 aa).

Substrate-binding positions include 49 to 52 (TCNR), Ser-104, 109 to 111 (EPQ), and Gln-115. Cys-50 serves as the catalytic Nucleophile. Residue 184-189 (GAGEMI) coordinates NADP(+).

Belongs to the glutamyl-tRNA reductase family. In terms of assembly, homodimer.

It catalyses the reaction (S)-4-amino-5-oxopentanoate + tRNA(Glu) + NADP(+) = L-glutamyl-tRNA(Glu) + NADPH + H(+). The protein operates within porphyrin-containing compound metabolism; protoporphyrin-IX biosynthesis; 5-aminolevulinate from L-glutamyl-tRNA(Glu): step 1/2. Functionally, catalyzes the NADPH-dependent reduction of glutamyl-tRNA(Glu) to glutamate 1-semialdehyde (GSA). The protein is Glutamyl-tRNA reductase of Neisseria meningitidis serogroup C / serotype 2a (strain ATCC 700532 / DSM 15464 / FAM18).